Here is a 362-residue protein sequence, read N- to C-terminus: Mannan endo-1,4-beta-mannosidase (362 aa).

Residues 1-26 (MFKKHTISLLIIFLLASAVLAKPIEA) form the signal peptide. One can recognise a GH26 domain in the interval 38–349 (QTTKTVMNWL…YHDSWTLNKG (312 aa)). Substrate is bound at residue His131. Residue Glu193 is the Proton donor of the active site. Substrate is bound by residues Trp198 and Tyr268. The Nucleophile role is filled by Glu292. Position 324–325 (324–325 (WN)) interacts with substrate.

It belongs to the glycosyl hydrolase 26 family. Homodimer.

The protein resides in the secreted. The enzyme catalyses Random hydrolysis of (1-&gt;4)-beta-D-mannosidic linkages in mannans, galactomannans and glucomannans.. Involved in the degradation of glucomannan. Catalyzes the endo hydrolysis of beta-1,4-linked mannan, galactomannan and glucomannan. This is Mannan endo-1,4-beta-mannosidase from Bacillus subtilis (strain 168).